Here is an 87-residue protein sequence, read N- to C-terminus: uncharacterized protein (87 aa).

This is an uncharacterized protein from Escherichia coli (Bacteriophage T4).